Reading from the N-terminus, the 129-residue chain is Succinate dehydrogenase cytochrome b556 subunit (129 aa).

Residues 1–26 lie on the Cytoplasmic side of the membrane; it reads MIRNVKKQRPVNLDLQTIRFPITAIA. The helical transmembrane segment at 27 to 52 threads the bilayer; that stretch reads SILHRVSGVITFVAVGILLWLLGTSL. The Periplasmic segment spans residues 53–68; that stretch reads SSPEGFEQASAIMGSF. Residues 69 to 89 traverse the membrane as a helical segment; it reads FVKFIMWGILTALAYHVVVGI. Residue His-84 coordinates heme. Topologically, residues 90–108 are cytoplasmic; sequence RHMMMDFGYLEETFEAGKR. Residues 109–129 form a helical membrane-spanning segment; the sequence is SAKISFVITVVLSLLAGVLVW.

It belongs to the cytochrome b560 family. In terms of assembly, part of an enzyme complex containing four subunits: a flavoprotein, an iron-sulfur protein, plus two membrane-anchoring proteins, SdhC and SdhD. The complex can form homotrimers. It depends on heme as a cofactor.

It is found in the cell inner membrane. It functions in the pathway carbohydrate metabolism; tricarboxylic acid cycle. Its function is as follows. Membrane-anchoring subunit of succinate dehydrogenase (SDH). In Escherichia coli O157:H7, this protein is Succinate dehydrogenase cytochrome b556 subunit (sdhC).